The primary structure comprises 82 residues: Putative antitoxin Saci_0468 (82 aa).

Belongs to the UPF0330 family.

Functionally, possibly the antitoxin component of a type II toxin-antitoxin (TA) system. The polypeptide is Putative antitoxin Saci_0468 (Sulfolobus acidocaldarius (strain ATCC 33909 / DSM 639 / JCM 8929 / NBRC 15157 / NCIMB 11770)).